The primary structure comprises 343 residues: Protein RecA (343 aa).

Residue 64–71 coordinates ATP; sequence GPESSGKT.

This sequence belongs to the RecA family.

The protein resides in the cytoplasm. In terms of biological role, can catalyze the hydrolysis of ATP in the presence of single-stranded DNA, the ATP-dependent uptake of single-stranded DNA by duplex DNA, and the ATP-dependent hybridization of homologous single-stranded DNAs. It interacts with LexA causing its activation and leading to its autocatalytic cleavage. This is Protein RecA from Bacillus thuringiensis (strain Al Hakam).